A 704-amino-acid polypeptide reads, in one-letter code: Transcription factor HNF-4 homolog (704 aa).

Residues 93–133 (SAGGGSASSGSNNNNSMFSPNNNLSGSGSGTNSSQQQLQQQ) are disordered. Residues 100-133 (SSGSNNNNSMFSPNNNLSGSGSGTNSSQQQLQQQ) show a composition bias toward low complexity. Positions 139–214 (PTVCAICGDR…AGMKKEAVQN (76 aa)) form a DNA-binding region, nuclear receptor. 2 NR C4-type zinc fingers span residues 142–162 (CAIC…CDGC) and 178–197 (CRFA…CRYC). Residues 232–470 (GNGLSVISLV…SLLQEMLLGG (239 aa)) enclose the NR LBD domain. 3 disordered regions span residues 474 to 520 (DNPL…GSHS), 563 to 624 (PASV…QRMH), and 684 to 704 (PAGY…ETGY). The segment covering 487–512 (DYQSPTHTGNMEGGNQVNSSLDSLAT) has biased composition (polar residues). The segment covering 563–574 (PASVAPASISPP) has biased composition (low complexity). The span at 608–620 (GSRSGPLPTQHSP) shows a compositional bias: polar residues.

This sequence belongs to the nuclear hormone receptor family. NR2 subfamily. Homodimer. In third instar larvae, expressed at high levels in midgut and attached gastric caeca, fat body, Malpighian tubules and oenocytes, and at lower levels in proventriculus, salivary glands, epidermis, brain and ring gland. Not detected in imaginal disks and the median neurosecretory cells that produce insulin-like peptides (at protein level). In developing embryos, expressed in mid-gut, fat bodies and the distal region of Malpighian tubules.

The protein localises to the nucleus. Transcriptionally controlled transcription factor. Important for the differentiation of various specialized cell types that arise from both endoderm and mesoderm. May have a role in early gut formation. Plays an essential role in lipid catabolism, regulating lipid mobilization and beta-oxidation in response to nutrient deprivation. This chain is Transcription factor HNF-4 homolog (Hnf4), found in Drosophila melanogaster (Fruit fly).